The following is a 305-amino-acid chain: Probable cell division protein WhiA (305 aa).

Residues 269 to 302 (TIKELGELLEPSLGKSGVNHRLRKLVEQANELRK) constitute a DNA-binding region (H-T-H motif).

The protein belongs to the WhiA family.

In terms of biological role, involved in cell division and chromosome segregation. The polypeptide is Probable cell division protein WhiA (Lactococcus lactis subsp. lactis (strain IL1403) (Streptococcus lactis)).